Consider the following 395-residue polypeptide: Elongation factor Tu (395 aa).

The region spanning 10–204 (KPHVNIGTIG…IVDEYIPTPE (195 aa)) is the tr-type G domain. A G1 region spans residues 19 to 26 (GHVDHGKT). 19-26 (GHVDHGKT) contacts GTP. Thr-26 contributes to the Mg(2+) binding site. The segment at 60 to 64 (GITIN) is G2. Residues 81–84 (DAPG) are G3. GTP contacts are provided by residues 81–85 (DAPGH) and 136–139 (NKAD). The segment at 136–139 (NKAD) is G4. A G5 region spans residues 174 to 176 (SAL).

It belongs to the TRAFAC class translation factor GTPase superfamily. Classic translation factor GTPase family. EF-Tu/EF-1A subfamily. Monomer.

The protein localises to the cytoplasm. It catalyses the reaction GTP + H2O = GDP + phosphate + H(+). In terms of biological role, GTP hydrolase that promotes the GTP-dependent binding of aminoacyl-tRNA to the A-site of ribosomes during protein biosynthesis. This Lactococcus lactis subsp. lactis (strain IL1403) (Streptococcus lactis) protein is Elongation factor Tu.